The sequence spans 406 residues: Tryptophan synthase beta chain (406 aa).

Lysine 99 bears the N6-(pyridoxal phosphate)lysine mark.

Belongs to the TrpB family. Tetramer of two alpha and two beta chains. It depends on pyridoxal 5'-phosphate as a cofactor.

The catalysed reaction is (1S,2R)-1-C-(indol-3-yl)glycerol 3-phosphate + L-serine = D-glyceraldehyde 3-phosphate + L-tryptophan + H2O. It participates in amino-acid biosynthesis; L-tryptophan biosynthesis; L-tryptophan from chorismate: step 5/5. Functionally, the beta subunit is responsible for the synthesis of L-tryptophan from indole and L-serine. The protein is Tryptophan synthase beta chain of Brucella canis (strain ATCC 23365 / NCTC 10854 / RM-666).